Consider the following 369-residue polypeptide: Putative F-box/kelch-repeat protein At4g39760 (369 aa).

The region spanning serine 14–arginine 60 is the F-box domain. Kelch repeat units follow at residues glutamate 131–proline 177, asparagine 178–methionine 224, and asparagine 228–tryptophan 274.

The polypeptide is Putative F-box/kelch-repeat protein At4g39760 (Arabidopsis thaliana (Mouse-ear cress)).